Reading from the N-terminus, the 80-residue chain is Large ribosomal subunit protein uL24 (80 aa).

It belongs to the universal ribosomal protein uL24 family. Part of the 50S ribosomal subunit.

Its function is as follows. One of two assembly initiator proteins, it binds directly to the 5'-end of the 23S rRNA, where it nucleates assembly of the 50S subunit. In terms of biological role, one of the proteins that surrounds the polypeptide exit tunnel on the outside of the subunit. The protein is Large ribosomal subunit protein uL24 of Chlorobium phaeovibrioides (strain DSM 265 / 1930) (Prosthecochloris vibrioformis (strain DSM 265)).